The sequence spans 367 residues: Aurora kinase (367 aa).

Residues 30-49 form a disordered region; sequence TTATNGAPPQARVQPGKGYR. The region spanning 109-360 is the Protein kinase domain; the sequence is FEIGKVLGKG…LKEVKKHPWI (252 aa). ATP is bound by residues 115 to 123 and Lys138; that span reads LGKGKFGRV. Catalysis depends on Asp232, which acts as the Proton acceptor.

This sequence belongs to the protein kinase superfamily. Ser/Thr protein kinase family. Aurora subfamily.

The protein localises to the nucleus. Its subcellular location is the cytoplasm. The protein resides in the cytoskeleton. It is found in the spindle. It localises to the chromosome. The protein localises to the centromere. Its subcellular location is the kinetochore. It catalyses the reaction L-seryl-[protein] + ATP = O-phospho-L-seryl-[protein] + ADP + H(+). It carries out the reaction L-threonyl-[protein] + ATP = O-phospho-L-threonyl-[protein] + ADP + H(+). Its function is as follows. Component of the chromosomal passenger complex (CPC), a complex that acts as a key regulator of chromosome segregation and cytokinesis. Has a role in error-correction of aberrent kinetochore-microtubule attachments to ensure that sister kinetochores become bioriented and connect to opposite poles by promoting spindle assembly checkpoint signaling. In Eremothecium gossypii (strain ATCC 10895 / CBS 109.51 / FGSC 9923 / NRRL Y-1056) (Yeast), this protein is Aurora kinase (IPL1).